The following is a 351-amino-acid chain: D-alanine--D-alanine ligase (351 aa).

Residues 135–344 enclose the ATP-grasp domain; that stretch reads KMAFAQAGLP…FAELVDQLIQ (210 aa). 171 to 226 contributes to the ATP binding site; it reads EQRLGYPCFVKPANLGSSVGIAKVRSRSELEKALDSAASYDRRIVIETGVKAREVE. 3 residues coordinate Mg(2+): D297, E311, and N313.

It belongs to the D-alanine--D-alanine ligase family. The cofactor is Mg(2+). Mn(2+) serves as cofactor.

It is found in the cytoplasm. The enzyme catalyses 2 D-alanine + ATP = D-alanyl-D-alanine + ADP + phosphate + H(+). It participates in cell wall biogenesis; peptidoglycan biosynthesis. Its function is as follows. Cell wall formation. The polypeptide is D-alanine--D-alanine ligase (Rippkaea orientalis (strain PCC 8801 / RF-1) (Cyanothece sp. (strain PCC 8801))).